The chain runs to 256 residues: NH(3)-dependent NAD(+) synthetase (256 aa).

29 to 36 (GISGGIDS) is a binding site for ATP. Mg(2+) is bound at residue Asp35. Residue Arg115 coordinates deamido-NAD(+). Thr135 lines the ATP pocket. Glu140 is a Mg(2+) binding site. Deamido-NAD(+) is bound by residues Lys148 and Asp155. ATP contacts are provided by Lys164 and Ser186. 245 to 246 (HK) provides a ligand contact to deamido-NAD(+).

The protein belongs to the NAD synthetase family. As to quaternary structure, homodimer.

The enzyme catalyses deamido-NAD(+) + NH4(+) + ATP = AMP + diphosphate + NAD(+) + H(+). It participates in cofactor biosynthesis; NAD(+) biosynthesis; NAD(+) from deamido-NAD(+) (ammonia route): step 1/1. Functionally, catalyzes the ATP-dependent amidation of deamido-NAD to form NAD. Uses ammonia as a nitrogen source. In Methanosarcina acetivorans (strain ATCC 35395 / DSM 2834 / JCM 12185 / C2A), this protein is NH(3)-dependent NAD(+) synthetase.